Here is a 110-residue protein sequence, read N- to C-terminus: Tyrosine-protein phosphatase 3 (110 aa).

The Tyrosine-protein phosphatase domain maps to 1 to 110 (QKCATIVMVT…NPPHSGPIVV (110 aa)). Position 80 (D80) interacts with substrate.

It belongs to the protein-tyrosine phosphatase family.

The catalysed reaction is O-phospho-L-tyrosyl-[protein] + H2O = L-tyrosyl-[protein] + phosphate. This Styela plicata (Wrinkled sea squirt) protein is Tyrosine-protein phosphatase 3 (STY-3).